The following is a 244-amino-acid chain: Phosphoadenosine 5'-phosphosulfate reductase (244 aa).

The active-site Nucleophile; cysteine thiosulfonate intermediate is the cysteine 239.

It belongs to the PAPS reductase family. CysH subfamily.

It is found in the cytoplasm. The enzyme catalyses [thioredoxin]-disulfide + sulfite + adenosine 3',5'-bisphosphate + 2 H(+) = [thioredoxin]-dithiol + 3'-phosphoadenylyl sulfate. It functions in the pathway sulfur metabolism; hydrogen sulfide biosynthesis; sulfite from sulfate: step 3/3. In terms of biological role, catalyzes the formation of sulfite from phosphoadenosine 5'-phosphosulfate (PAPS) using thioredoxin as an electron donor. The chain is Phosphoadenosine 5'-phosphosulfate reductase from Sodalis glossinidius (strain morsitans).